The sequence spans 176 residues: ATP-dependent protease subunit HslV (176 aa).

Residue T2 is part of the active site. Residues G157, C160, and T163 each coordinate Na(+).

Belongs to the peptidase T1B family. HslV subfamily. In terms of assembly, a double ring-shaped homohexamer of HslV is capped on each side by a ring-shaped HslU homohexamer. The assembly of the HslU/HslV complex is dependent on binding of ATP.

The protein resides in the cytoplasm. The enzyme catalyses ATP-dependent cleavage of peptide bonds with broad specificity.. Its activity is regulated as follows. Allosterically activated by HslU binding. In terms of biological role, protease subunit of a proteasome-like degradation complex believed to be a general protein degrading machinery. This is ATP-dependent protease subunit HslV from Salmonella agona (strain SL483).